Here is a 1272-residue protein sequence, read N- to C-terminus: Presporeless protein A (1272 aa).

The Nuclear localization signal motif lies at 146–161 (KDKRIKPIDPKKKISR). 2 disordered regions span residues 369-403 (ASTI…DDTS) and 468-490 (STSS…NQLK). Residues 374–392 (DGEEEDDDDDDNDVDGNDD) show a composition bias toward acidic residues. Positions 393–403 (DNNKEKVDDTS) are enriched in basic and acidic residues. Low complexity predominate over residues 468–487 (STSSTNTASSTRSKASSNSN).

Its subcellular location is the nucleus. In terms of biological role, functions autonomously, very early in the prespore pathway, to control prespore cell differentiation, maybe at the level of transcription. Also required for proper aggregation. This is Presporeless protein A (pslA) from Dictyostelium discoideum (Social amoeba).